The chain runs to 384 residues: MAP kinase-activated protein kinase 3 (384 aa).

Met-1 is subject to N-acetylmethionine. The disordered stretch occupies residues 1-33 (MDGETAGEKGSLVPQPGALGAPALGGAPAPGVR). Low complexity predominate over residues 14 to 31 (PQPGALGAPALGGAPAPG). In terms of domain architecture, Protein kinase spans 46–306 (QLSKQVLGLG…IMQFMNHPWI (261 aa)). ATP contacts are provided by residues 52-60 (LGLGVNGKV) and Lys-75. Catalysis depends on Asp-168, which acts as the Proton acceptor. Thr-203 is modified (phosphothreonine; by MAPK14). Ser-253 bears the Phosphoserine; by MAPK14 mark. Phosphoserine; by autocatalysis is present on Ser-309. An autoinhibitory helix region spans residues 309–345 (SMEVPQTPLHTARVLEEDKDHWDDVKEEMTSALATMR). Residue Thr-315 is modified to Phosphothreonine; by MAPK14. A Nuclear export signal (NES) motif is present at residues 337–346 (MTSALATMRV). Residues 347-371 (DYDQVKIKDLKTSNNRLLNKRRKKQ) form a p38 MAPK-binding site region. 2 consecutive short sequence motifs (bipartite nuclear localization signal) follow at residues 352–355 (KIKD) and 366–370 (KRRKK). Residues 359–384 (SNNRLLNKRRKKQGGSSSASPGCNNQ) are disordered. Residues 372-384 (GGSSSASPGCNNQ) show a composition bias toward polar residues.

It belongs to the protein kinase superfamily. CAMK Ser/Thr protein kinase family. Heterodimer with p38-alpha/MAPK14. The heterodimer with p38-alpha/MAPK14 forms a stable complex: molecules are positioned 'face to face' so that the ATP-binding sites of both kinases are at the heterodimer interface. Interacts with TCF3 and with polycomb proteins, such as PCH2 and BMI1/PCGF4. Post-translationally, phosphorylated and activated by MAPK1/ERK2 and MAPK3/ERK1. Phosphorylated and activated by MAP kinase p38-alpha/MAPK14 at Thr-203, Ser-253 and Thr-315.

Its subcellular location is the nucleus. The protein resides in the cytoplasm. The enzyme catalyses L-seryl-[protein] + ATP = O-phospho-L-seryl-[protein] + ADP + H(+). It carries out the reaction L-threonyl-[protein] + ATP = O-phospho-L-threonyl-[protein] + ADP + H(+). With respect to regulation, activated following phosphorylation by p38-alpha/MAPK14 following various stresses. Inhibited by ligand 5B (2'-[2-(1,3-benzodioxol-5-yl)pyrimidin-4-yl]-5',6'-dihydrospiro[piperidine-4,7'-pyrrolo[3,2-c]pyridin]- 4'(1'h)-one) and ligand P4O (2-[2-(2-fluorophenyl)pyridin-4-yl]-1,5,6,7-tetrahydro- 4h-pyrrolo[3,2-c]pyridin-4-one), 2 ATP-competitive inhibitors. Stress-activated serine/threonine-protein kinase involved in cytokines production, endocytosis, cell migration, chromatin remodeling and transcriptional regulation. Following stress, it is phosphorylated and activated by MAP kinase p38-alpha/MAPK14, leading to phosphorylation of substrates. Phosphorylates serine in the peptide sequence, Hyd-X-R-X(2)-S, where Hyd is a large hydrophobic residue. MAPKAPK2 and MAPKAPK3, share the same function and substrate specificity, but MAPKAPK3 kinase activity and level in protein expression are lower compared to MAPKAPK2. Phosphorylates HSP27/HSPB1, KRT18, KRT20, RCSD1, RPS6KA3, TAB3 and TTP/ZFP36. Mediates phosphorylation of HSP27/HSPB1 in response to stress, leading to dissociate HSP27/HSPB1 from large small heat-shock protein (sHsps) oligomers and impair their chaperone activities and ability to protect against oxidative stress effectively. Involved in inflammatory response by regulating tumor necrosis factor (TNF) and IL6 production post-transcriptionally: acts by phosphorylating AU-rich elements (AREs)-binding proteins, such as TTP/ZFP36, leading to regulate the stability and translation of TNF and IL6 mRNAs. Phosphorylation of TTP/ZFP36, a major post-transcriptional regulator of TNF, promotes its binding to 14-3-3 proteins and reduces its ARE mRNA affinity leading to inhibition of dependent degradation of ARE-containing transcript. Involved in toll-like receptor signaling pathway (TLR) in dendritic cells: required for acute TLR-induced macropinocytosis by phosphorylating and activating RPS6KA3. Also acts as a modulator of Polycomb-mediated repression. The polypeptide is MAP kinase-activated protein kinase 3 (Mapkapk3) (Rattus norvegicus (Rat)).